A 329-amino-acid polypeptide reads, in one-letter code: tRNA N6-adenosine threonylcarbamoyltransferase (329 aa).

His-107 and His-111 together coordinate Fe cation. Substrate is bound by residues 129 to 133 (LVSGG), Asp-162, Gly-175, and Asn-268. Asp-296 provides a ligand contact to Fe cation.

Belongs to the KAE1 / TsaD family. It depends on Fe(2+) as a cofactor.

Its subcellular location is the cytoplasm. The enzyme catalyses L-threonylcarbamoyladenylate + adenosine(37) in tRNA = N(6)-L-threonylcarbamoyladenosine(37) in tRNA + AMP + H(+). Its function is as follows. Required for the formation of a threonylcarbamoyl group on adenosine at position 37 (t(6)A37) in tRNAs that read codons beginning with adenine. Is involved in the transfer of the threonylcarbamoyl moiety of threonylcarbamoyl-AMP (TC-AMP) to the N6 group of A37, together with TsaE and TsaB. TsaD likely plays a direct catalytic role in this reaction. The sequence is that of tRNA N6-adenosine threonylcarbamoyltransferase from Nitratiruptor sp. (strain SB155-2).